Consider the following 293-residue polypeptide: Nucleotide-binding protein Bcer98_3698 (293 aa).

Residue 14–21 (GMSGAGKT) participates in ATP binding. A GTP-binding site is contributed by 65–68 (DLRG).

The protein belongs to the RapZ-like family.

Its function is as follows. Displays ATPase and GTPase activities. This Bacillus cytotoxicus (strain DSM 22905 / CIP 110041 / 391-98 / NVH 391-98) protein is Nucleotide-binding protein Bcer98_3698.